The chain runs to 254 residues: Protein Thf1 (254 aa).

The stretch at 182 to 241 (EEKMKKDLDLYRSNLEKMNQVLEVLEDALAVERQRREKAEAEAKAKTAEATVATETNDEQ) forms a coiled coil. Over residues 215-228 (QRREKAEAEAKAKT) the composition is skewed to basic and acidic residues. The segment at 215-254 (QRREKAEAEAKAKTAEATVATETNDEQDEQKETSESGSDA) is disordered.

The protein belongs to the THF1 family.

Its function is as follows. May be involved in photosynthetic membrane biogenesis. In Picosynechococcus sp. (strain ATCC 27264 / PCC 7002 / PR-6) (Agmenellum quadruplicatum), this protein is Protein Thf1.